Reading from the N-terminus, the 171-residue chain is MVLSDFIYPACEGLCFPKISRTKDSNHKTYEFFNKKKHPKKYVDNSDALFLIKRARDSFLSHIKLKDKHMKKNYLTELSPEQIRGRFFLSGDKNFYCIYFYFTDEDAVFYCVFGIIEKSTGKHLLFVREFWSGSFDACCIKHNSFDYYSGDKYMEKTNVLNLPVILSNDTK.

This sequence belongs to the mimivirus R24/R907 family.

This is an uncharacterized protein from Acanthamoeba polyphaga (Amoeba).